A 77-amino-acid polypeptide reads, in one-letter code: Conotoxin Bt6.6 (77 aa).

The signal sequence occupies residues 1 to 19 (MEKLTILLLVAAVLMSTQA). Positions 20-38 (LIQSDGEKRQQAKINFLSX) are excised as a propeptide. Cystine bridges form between Cys51–Cys65, Cys58–Cys69, and Cys64–Cys74.

The protein belongs to the conotoxin O2 superfamily. In terms of tissue distribution, expressed by the venom duct.

It is found in the secreted. This Conus betulinus (Beech cone) protein is Conotoxin Bt6.6.